A 294-amino-acid polypeptide reads, in one-letter code: Phosphoribosylaminoimidazole-succinocarboxamide synthase (294 aa).

This sequence belongs to the SAICAR synthetase family.

It carries out the reaction 5-amino-1-(5-phospho-D-ribosyl)imidazole-4-carboxylate + L-aspartate + ATP = (2S)-2-[5-amino-1-(5-phospho-beta-D-ribosyl)imidazole-4-carboxamido]succinate + ADP + phosphate + 2 H(+). The protein operates within purine metabolism; IMP biosynthesis via de novo pathway; 5-amino-1-(5-phospho-D-ribosyl)imidazole-4-carboxamide from 5-amino-1-(5-phospho-D-ribosyl)imidazole-4-carboxylate: step 1/2. The polypeptide is Phosphoribosylaminoimidazole-succinocarboxamide synthase (Thermoplasma volcanium (strain ATCC 51530 / DSM 4299 / JCM 9571 / NBRC 15438 / GSS1)).